Here is a 68-residue protein sequence, read N- to C-terminus: DNA-directed RNA polymerase subunit omega (68 aa).

Belongs to the RNA polymerase subunit omega family. As to quaternary structure, the RNAP catalytic core consists of 2 alpha, 1 beta, 1 beta' and 1 omega subunit. When a sigma factor is associated with the core the holoenzyme is formed, which can initiate transcription.

The catalysed reaction is RNA(n) + a ribonucleoside 5'-triphosphate = RNA(n+1) + diphosphate. Promotes RNA polymerase assembly. Latches the N- and C-terminal regions of the beta' subunit thereby facilitating its interaction with the beta and alpha subunits. The chain is DNA-directed RNA polymerase subunit omega from Geobacter sp. (strain M21).